The following is a 212-amino-acid chain: 3-oxo-tetronate 4-phosphate decarboxylase (212 aa).

Glu79 serves as the catalytic Proton acceptor. Zn(2+)-binding residues include Glu79, His98, and His100. Residue Tyr125 is the Proton donor of the active site. Position 165 (His165) interacts with Zn(2+).

It belongs to the aldolase class II family. AraD/FucA subfamily. The cofactor is Zn(2+).

The catalysed reaction is 3-dehydro-4-O-phospho-D-erythronate + H(+) = dihydroxyacetone phosphate + CO2. It carries out the reaction 3-dehydro-4-O-phospho-L-erythronate + H(+) = dihydroxyacetone phosphate + CO2. Its function is as follows. Catalyzes the decarboxylation of 3-oxo-tetronate 4-phosphate to dihydroxyacetone phosphate (DHAP) and CO(2). The chain is 3-oxo-tetronate 4-phosphate decarboxylase from Escherichia coli (strain K12).